We begin with the raw amino-acid sequence, 175 residues long: ATP synthase subunit b (175 aa).

The chain crosses the membrane as a helical span at residues 20–40; that stretch reads LIFWTAVTFVIVLLILKQLAW.

The protein belongs to the ATPase B chain family. F-type ATPases have 2 components, F(1) - the catalytic core - and F(0) - the membrane proton channel. F(1) has five subunits: alpha(3), beta(3), gamma(1), delta(1), epsilon(1). F(0) has four main subunits: a(1), b(2) and c(10-14). The alpha and beta chains form an alternating ring which encloses part of the gamma chain. F(1) is attached to F(0) by a central stalk formed by the gamma and epsilon chains, while a peripheral stalk is formed by the delta and b chains.

It localises to the cell inner membrane. Functionally, f(1)F(0) ATP synthase produces ATP from ADP in the presence of a proton or sodium gradient. F-type ATPases consist of two structural domains, F(1) containing the extramembraneous catalytic core and F(0) containing the membrane proton channel, linked together by a central stalk and a peripheral stalk. During catalysis, ATP synthesis in the catalytic domain of F(1) is coupled via a rotary mechanism of the central stalk subunits to proton translocation. In terms of biological role, component of the F(0) channel, it forms part of the peripheral stalk, linking F(1) to F(0). In Chlorobium limicola (strain DSM 245 / NBRC 103803 / 6330), this protein is ATP synthase subunit b.